The sequence spans 274 residues: Transcription factor MYB58 (274 aa).

HTH myb-type domains lie at 11–63 (KTKV…INYL) and 64–118 (RPDV…KKRL). DNA-binding regions (H-T-H motif) lie at residues 39 to 63 (WRSL…INYL) and 91 to 114 (WSKI…HTHL). Disordered regions lie at residues 121-160 (ETNL…ISSK) and 237-274 (SELG…LLIH). Positions 263–274 (SSLLESYELLIH) are enriched in low complexity.

As to expression, expressed in leaves. Specifically expressed in fibers and vessels undergoing secondary wall thickening, especially in inflorescence stems.

It is found in the nucleus. Transcriptional activator that binds DNA to the AC cis-elements 5'-ACCTACC-3', 5'-ACCAACC-3' and 5'-ACCTAAC-3' of promoters and specifically activates lignin biosynthetic genes during secondary wall formation mediated by SND1. This Arabidopsis thaliana (Mouse-ear cress) protein is Transcription factor MYB58.